The sequence spans 240 residues: 2-C-methyl-D-erythritol 4-phosphate cytidylyltransferase (240 aa).

The protein belongs to the IspD/TarI cytidylyltransferase family. IspD subfamily.

It carries out the reaction 2-C-methyl-D-erythritol 4-phosphate + CTP + H(+) = 4-CDP-2-C-methyl-D-erythritol + diphosphate. Its pathway is isoprenoid biosynthesis; isopentenyl diphosphate biosynthesis via DXP pathway; isopentenyl diphosphate from 1-deoxy-D-xylulose 5-phosphate: step 2/6. Functionally, catalyzes the formation of 4-diphosphocytidyl-2-C-methyl-D-erythritol from CTP and 2-C-methyl-D-erythritol 4-phosphate (MEP). In Chlorobium luteolum (strain DSM 273 / BCRC 81028 / 2530) (Pelodictyon luteolum), this protein is 2-C-methyl-D-erythritol 4-phosphate cytidylyltransferase.